Reading from the N-terminus, the 507-residue chain is Putative UDP-glucuronosyltransferase ugt-60 (507 aa).

Residues 1 to 15 form the signal peptide; it reads MYLPIFCIFLSVVDS. N-linked (GlcNAc...) asparagine glycosylation is present at Asn312. Residues 379 to 399 form a helical membrane-spanning segment; the sequence is YNSFLEAAQAGIPAVLMPLFA.

This sequence belongs to the UDP-glycosyltransferase family.

It localises to the membrane. The catalysed reaction is glucuronate acceptor + UDP-alpha-D-glucuronate = acceptor beta-D-glucuronoside + UDP + H(+). The chain is Putative UDP-glucuronosyltransferase ugt-60 (ugt-60) from Caenorhabditis elegans.